A 465-amino-acid polypeptide reads, in one-letter code: Cysteine--tRNA ligase (465 aa).

A Zn(2+)-binding site is contributed by C29. Positions 31 to 41 (PTVYNYIHIGN) match the 'HIGH' region motif. Residues C209, H234, and E238 each coordinate Zn(2+). Residues 266 to 270 (KMSKS) carry the 'KMSKS' region motif. K269 serves as a coordination point for ATP. At S270 the chain carries Phosphoserine.

It belongs to the class-I aminoacyl-tRNA synthetase family. As to quaternary structure, monomer. It depends on Zn(2+) as a cofactor.

Its subcellular location is the cytoplasm. It catalyses the reaction tRNA(Cys) + L-cysteine + ATP = L-cysteinyl-tRNA(Cys) + AMP + diphosphate. This chain is Cysteine--tRNA ligase, found in Bacillus cereus (strain ATCC 10987 / NRS 248).